The sequence spans 312 residues: MELLFLGTGSGVPSKGRNVSAVALQLLEERGATWLFDCGEATQHQILHTSIRPRRIERIFITHLHGDHIFGLPGLLGSRSFQGGETPLFVYGPAGIRSFVETALAVSGTRLKYELYIEEFTEGVIFEDEQFIVTAKLLDHGLPSYGFRIVEKDLPGTLLVDELRALGVKPGPIYQQIKRGEVVTLDDGTVIDGRKFVAPPKKGRMIAIMGDTRYCEASVELAEGVDVLVHEATFSANEAHLARDYYHSTTVQAAEVAKRARAKQLILTHISSRYQGEMCDQLVEEAKTIFPNVALASDFSSFSIIRKGHDER.

Zn(2+) is bound by residues H63, H65, D67, H68, H140, D211, and H269. The Proton acceptor role is filled by D67.

Belongs to the RNase Z family. Homodimer. Requires Zn(2+) as cofactor.

The catalysed reaction is Endonucleolytic cleavage of RNA, removing extra 3' nucleotides from tRNA precursor, generating 3' termini of tRNAs. A 3'-hydroxy group is left at the tRNA terminus and a 5'-phosphoryl group is left at the trailer molecule.. Zinc phosphodiesterase, which displays some tRNA 3'-processing endonuclease activity. Probably involved in tRNA maturation, by removing a 3'-trailer from precursor tRNA. The sequence is that of Ribonuclease Z from Anoxybacillus flavithermus (strain DSM 21510 / WK1).